Reading from the N-terminus, the 57-residue chain is Cecropin-A (57 aa).

Positions 1–21 are cleaved as a signal peptide; it reads IFFFVFACLLALSAVSAAPEP.

This sequence belongs to the cecropin family.

Its subcellular location is the secreted. Cecropins have lytic and antibacterial activity against several Gram-positive and Gram-negative bacteria. The chain is Cecropin-A (CECA) from Spodoptera litura (Asian cotton leafworm).